Consider the following 625-residue polypeptide: Glucokinase regulatory protein (625 aa).

SIS domains lie at 90–286 (VQEV…QGIA) and 320–499 (VSTS…LLGK). Beta-D-fructose 1-phosphate is bound by residues 109–110 (TS), E153, and 179–181 (SVG). Position 109–110 (109–110 (TS)) interacts with beta-D-fructose 6-phosphate. 179 to 181 (SVG) contacts beta-D-fructose 6-phosphate. The segment at 199–200 (AV) is important for interaction with GCK. E348 is a binding site for beta-D-fructose 1-phosphate. Positions 463–465 (LLF) are essential for interaction with GCK. K514 provides a ligand contact to beta-D-fructose 1-phosphate. K514 lines the beta-D-fructose 6-phosphate pocket.

This sequence belongs to the GCKR family. Interacts (fructose 6-phosphate bound form) with GCK. Found in liver and pancreas. Not detected in muscle, brain, heart, thymus, intestine, uterus, adipose tissue, kidney, adrenal, lung or spleen.

The protein localises to the cytoplasm. Its subcellular location is the nucleus. The protein resides in the mitochondrion. In terms of biological role, regulates glucokinase (GCK) by forming an inactive complex with this enzyme. Acts by promoting GCK recruitment to the nucleus, possibly to provide a reserve of GCK that can be quickly released in the cytoplasm after a meal. The affinity of GCKR for GCK is modulated by fructose metabolites: GCKR with bound fructose 6-phosphate has increased affinity for GCK, while GCKR with bound fructose 1-phosphate has strongly decreased affinity for GCK and does not inhibit GCK activity. This chain is Glucokinase regulatory protein, found in Homo sapiens (Human).